Here is a 304-residue protein sequence, read N- to C-terminus: Acetyl-coenzyme A carboxylase carboxyl transferase subunit beta (304 aa).

One can recognise a CoA carboxyltransferase N-terminal domain in the interval 23 to 292 (VWTKCDSCGQ…PNPEAPREGV (270 aa)). Residues Cys27, Cys30, Cys46, and Cys49 each contribute to the Zn(2+) site. The segment at 27-49 (CDSCGQVLYRAELERNLEVCPKC) adopts a C4-type zinc-finger fold. Residues 284–304 (NPEAPREGVVVPPVPDQEPEA) are disordered. Positions 295–304 (PPVPDQEPEA) are enriched in pro residues.

Belongs to the AccD/PCCB family. In terms of assembly, acetyl-CoA carboxylase is a heterohexamer composed of biotin carboxyl carrier protein (AccB), biotin carboxylase (AccC) and two subunits each of ACCase subunit alpha (AccA) and ACCase subunit beta (AccD). It depends on Zn(2+) as a cofactor.

The protein resides in the cytoplasm. The catalysed reaction is N(6)-carboxybiotinyl-L-lysyl-[protein] + acetyl-CoA = N(6)-biotinyl-L-lysyl-[protein] + malonyl-CoA. The protein operates within lipid metabolism; malonyl-CoA biosynthesis; malonyl-CoA from acetyl-CoA: step 1/1. Its function is as follows. Component of the acetyl coenzyme A carboxylase (ACC) complex. Biotin carboxylase (BC) catalyzes the carboxylation of biotin on its carrier protein (BCCP) and then the CO(2) group is transferred by the transcarboxylase to acetyl-CoA to form malonyl-CoA. This Shigella flexneri serotype 5b (strain 8401) protein is Acetyl-coenzyme A carboxylase carboxyl transferase subunit beta.